The primary structure comprises 517 residues: MELEELGIREECGVFGCIASGEWPTQLDVPHVITLGLVGLQHRGQESAGIVTSDGSSVPTFKSHKGMGLVNHVFTEDNLKKLYVSNLGIGHTRYATTGKCELENCQPFVVETLHGKIAVAHNGELVNAARLRKKLLRHGIGLSTSSDSEMITQLLAYTPPQEQDDTPDWVARIKNLMKEAPTAYSLLIMHRDVIYAVRDPYGNRPLCIGRLIPVSDINDKEKKTSETEGWVVSSESCSFLSIGARYYREVLPGEIVEISRHNVQTLDIISRSEGNPVAFCIFEYVYFARPDSMFEDQMVYTVRYRCGQQLAIEAPVDADLVSTVPESATPAALAYAGKCGLPYVEVLCKNRYVGRTFIQPNMRLRQLGVAKKFGVLSDNFKGKRIVLVDDSIVRGNTISPIIKLLKESGAKEVHIRVASPPIKYPCFMGINIPTKEELIANKPEFDHLAEYLGANSVVYLSVEGLVSSVQEGIKFKKQKEKKHDIMIQENGNGLECFEKSGHCTACLTGKYPVELEW.

Met1 is modified (N-acetylmethionine). The propeptide occupies 1–11; the sequence is MELEELGIREE. Catalysis depends on Cys12, which acts as the Nucleophile. The Glutamine amidotransferase type-2 domain occupies 12-261; it reads CGVFGCIASG…PGEIVEISRH (250 aa). Position 280 (Cys280) interacts with [4Fe-4S] cluster. Residues Ser327, Asp389, and Asp390 each coordinate Mg(2+). [4Fe-4S] cluster is bound by residues Cys426, Cys503, and Cys506.

This sequence in the C-terminal section; belongs to the purine/pyrimidine phosphoribosyltransferase family. In terms of assembly, homotetramer. Requires Mg(2+) as cofactor. The cofactor is [4Fe-4S] cluster. In terms of tissue distribution, ubiquitously expressed.

It carries out the reaction 5-phospho-beta-D-ribosylamine + L-glutamate + diphosphate = 5-phospho-alpha-D-ribose 1-diphosphate + L-glutamine + H2O. It participates in purine metabolism; IMP biosynthesis via de novo pathway; N(1)-(5-phospho-D-ribosyl)glycinamide from 5-phospho-alpha-D-ribose 1-diphosphate: step 1/2. Catalyzes the formation of phosphoribosylamine from phosphoribosylpyrophosphate (PRPP) and glutamine. This is Amidophosphoribosyltransferase (PPAT) from Homo sapiens (Human).